An 85-amino-acid polypeptide reads, in one-letter code: uncharacterized protein (85 aa).

Ser22 is subject to Phosphoserine.

It is found in the cytoplasm. It localises to the nucleus. This is an uncharacterized protein from Saccharomyces cerevisiae (strain ATCC 204508 / S288c) (Baker's yeast).